A 322-amino-acid chain; its full sequence is Methionyl-tRNA formyltransferase (322 aa).

Residue 115-118 (SLLP) coordinates (6S)-5,6,7,8-tetrahydrofolate.

It belongs to the Fmt family.

It catalyses the reaction L-methionyl-tRNA(fMet) + (6R)-10-formyltetrahydrofolate = N-formyl-L-methionyl-tRNA(fMet) + (6S)-5,6,7,8-tetrahydrofolate + H(+). In terms of biological role, attaches a formyl group to the free amino group of methionyl-tRNA(fMet). The formyl group appears to play a dual role in the initiator identity of N-formylmethionyl-tRNA by promoting its recognition by IF2 and preventing the misappropriation of this tRNA by the elongation apparatus. The chain is Methionyl-tRNA formyltransferase from Treponema denticola (strain ATCC 35405 / DSM 14222 / CIP 103919 / JCM 8153 / KCTC 15104).